The following is a 127-amino-acid chain: MNCYETLFVVKPTLTEEETAAEIAKIKDVLAKVDAELLATDDMGMRKLAYPVQKNDRGYYTVLFYKANGEAIAEIERNLKINEEVIKFLTVKYVKNKEIAQFDKLVAAANKSKDAEPAEPKAETTEA.

The protein belongs to the bacterial ribosomal protein bS6 family.

Its function is as follows. Binds together with bS18 to 16S ribosomal RNA. The sequence is that of Small ribosomal subunit protein bS6 from Sulfurovum sp. (strain NBC37-1).